A 391-amino-acid polypeptide reads, in one-letter code: Outer membrane protein 41 (391 aa).

Residues 1 to 20 (MKVKYLMLTLVGAIALNASA) form the signal peptide. Gln21 carries the post-translational modification Pyrrolidone carboxylic acid. Residues 282–391 (TKTENILTEK…WNRVVIVRSK (110 aa)) form the OmpA-like domain.

Belongs to the outer membrane OOP (TC 1.B.6) superfamily. As to quaternary structure, disulfide-linked heterodimer with Omp40.

Its subcellular location is the cell outer membrane. Its function is as follows. May have porin activity and function in peptidoglycan binding. This chain is Outer membrane protein 41, found in Porphyromonas gingivalis (strain ATCC BAA-308 / W83).